We begin with the raw amino-acid sequence, 142 residues long: Arginine vasopressin-induced protein 1 (142 aa).

Disordered stretches follow at residues 1–28 and 74–142; these read MGTPASVVSEPPLWQVSTPQTRGRKQAS and RLRR…QIRH. Positions 15–28 are enriched in polar residues; that stretch reads QVSTPQTRGRKQAS. A compositionally biased stretch (basic residues) spans 74-88; sequence RLRRKRPPKQNHCSR. The segment covering 96 to 119 has biased composition (polar residues); it reads STASDPQASTTDTASSEQSGNSRR.

Functionally, may be involved in MAP kinase activation, epithelial sodium channel (ENaC) down-regulation and cell cycling. The protein is Arginine vasopressin-induced protein 1 (Avpi1) of Mus musculus (Mouse).